The chain runs to 332 residues: Trans-2'-carboxybenzalpyruvate hydratase-aldolase (332 aa).

Lys-178 acts as the Schiff-base intermediate with substrate in catalysis.

The protein belongs to the DapA family. In terms of assembly, homotrimer.

It catalyses the reaction (3Z)-4-(2-carboxyphenyl)-2-oxobut-3-enoate + H2O = 2-formylbenzoate + pyruvate. Its activity is regulated as follows. Not inhibited by sodium borohydride or sodium pyruvate. Unaffected by EDTA, EGTA, Mn(2+), Mg(2+) and Ca(2+). In terms of biological role, plays a role in phenanthrene catabolism. Catalyzes the transformation of trans-2'-carboxbenzalpyruvate to 2-formylbenzoate and pyruvate. This chain is Trans-2'-carboxybenzalpyruvate hydratase-aldolase, found in Nocardioides sp. (strain KP7).